The primary structure comprises 308 residues: Oxygen-dependent coproporphyrinogen-III oxidase (308 aa).

Position 94 (S94) interacts with substrate. Residues H98 and H108 each coordinate a divalent metal cation. H108 (proton donor) is an active-site residue. Position 110–112 (110–112 (NVR)) interacts with substrate. Residues H147 and H177 each coordinate a divalent metal cation. An important for dimerization region spans residues 242–277 (YVEFNLVWDRGTLFGLQTGGRTESILMSMPPLVRWE). Residue 260-262 (GGR) participates in substrate binding.

This sequence belongs to the aerobic coproporphyrinogen-III oxidase family. As to quaternary structure, homodimer. The cofactor is a divalent metal cation.

It localises to the cytoplasm. The catalysed reaction is coproporphyrinogen III + O2 + 2 H(+) = protoporphyrinogen IX + 2 CO2 + 2 H2O. Its pathway is porphyrin-containing compound metabolism; protoporphyrin-IX biosynthesis; protoporphyrinogen-IX from coproporphyrinogen-III (O2 route): step 1/1. Involved in the heme biosynthesis. Catalyzes the aerobic oxidative decarboxylation of propionate groups of rings A and B of coproporphyrinogen-III to yield the vinyl groups in protoporphyrinogen-IX. The protein is Oxygen-dependent coproporphyrinogen-III oxidase of Yersinia enterocolitica serotype O:8 / biotype 1B (strain NCTC 13174 / 8081).